The primary structure comprises 999 residues: Testis anion transporter 1 (999 aa).

Residues 1–93 (MQTERSLQSF…YRFKDWLLGD (93 aa)) lie on the Cytoplasmic side of the membrane. The chain crosses the membrane as a helical span at residues 94–114 (LLAGLSVGLVQVPQGLILSLL). The Extracellular segment spans residues 115–117 (TRQ). The helical transmembrane segment at 118-138 (LIPPLNVTYAAFCSSVIYVIF) threads the bilayer. A topological domain (cytoplasmic) is located at residue G139. The chain crosses the membrane as a helical span at residues 140 to 160 (SCHQMSIGPFFLVSALMINVL). The Extracellular segment spans residues 161 to 200 (KDRPFNNGHLILGTFVKDDFSVPTFYLSYNRSLSMVASTT). An N-linked (GlcNAc...) asparagine glycan is attached at N190. The chain crosses the membrane as a helical span at residues 201 to 221 (FLTGIIQLSMGMLGMGFMATY). At 222–230 (LPEAATSAY) the chain is on the cytoplasmic side. Residues 231 to 251 (LAAVALHIILAQMTCILGIMV) traverse the membrane as a helical segment. The Extracellular segment spans residues 252–268 (SFHAGPISFIYNIINYC). A helical transmembrane segment spans residues 269–289 (IALPKANSTSILLFITSVVAL). Residues 290-305 (RINKCIRITFNRYPIE) are Cytoplasmic-facing. Residues 306-326 (FPMELLLILGFSLLTSKITMA) form a helical membrane-spanning segment. The Extracellular portion of the chain corresponds to 327–354 (TENSKMLMNMIPYSFVFPENPEFGILSR). Residues 355–375 (VVLQALSLSFVSSFLLISLGK) form a helical membrane-spanning segment. The Cytoplasmic segment spans residues 376 to 390 (KIANFHNYRTNSNQD). Residues 391–411 (LIAIGLCNLLSSFFKCCVFTG) traverse the membrane as a helical segment. Residues 412–427 (SLSRTTIQDKSGGRQQ) lie on the Extracellular side of the membrane. Residues 428 to 448 (FASLVGAGVMLLLMVKMESFF) traverse the membrane as a helical segment. The Cytoplasmic portion of the chain corresponds to 449–453 (HNLPN). The chain crosses the membrane as a helical span at residues 454-474 (AVLAGIILSNVVPYLEAIYNL). Topologically, residues 475 to 494 (PSLWRQDQYECIIWMVTFSS) are extracellular. The helical transmembrane segment at 495–515 (AILLGLDVGLLISLAFTFFVI) threads the bilayer. Residues 516 to 544 (TIRSHRTKILVLGQIPNTNIYRNVNDYRE) lie on the Cytoplasmic side of the membrane. An STAS domain is found at 541 to 796 (DYREVILIPG…LSLHDAVLFA (256 aa)). A helical membrane pass occupies residues 545-565 (VILIPGVKIFQCCSSITFVNV). Over 566 to 999 (YHLKQKVLKE…RKPHNYPNSP (434 aa)) the chain is Extracellular. Positions 661 to 999 (TVSSTSQRNI…RKPHNYPNSP (339 aa)) are interaction with RACGAP1. Disordered stretches follow at residues 678-701 (EKAW…SESL) and 893-999 (SELD…PNSP). Over residues 684–696 (NSPPRNSPLPPPE) the composition is skewed to pro residues. Composition is skewed to acidic residues over residues 893 to 903 (SELDPGSELDS) and 912 to 947 (ELES…EPEP). Residues 973-982 (GSSNSQSRAP) are compositionally biased toward polar residues.

This sequence belongs to the SLC26A/SulP transporter (TC 2.A.53) family. Interacts with RACGAP1. Interacts with CFTR; stimulates anion transport activity of CFTR. N-glycosylated. Expressed in testis and epididymis. Located at the end of the midpiece of the flagella, known as the annulus, in spermatozoa.

It localises to the membrane. It carries out the reaction sulfate(out) + chloride(in) = sulfate(in) + chloride(out). The catalysed reaction is oxalate(in) + chloride(out) = oxalate(out) + chloride(in). Functionally, antiporter that mediates the exchange of sulfate and oxalate against chloride ions across a membrane. Stimulates anion transport activity of CFTR. May cooperate with CFTR in the regulation of chloride and bicarbonate ions fluxes required for activation of the ADCY10/PKA pathway during sperm motility and sperm capacitation. May play a role in sperm tail differentiation and motility and hence male fertility. In Mus musculus (Mouse), this protein is Testis anion transporter 1.